The sequence spans 562 residues: Dihydroxy-acid dehydratase (562 aa).

A Mg(2+)-binding site is contributed by aspartate 80. Cysteine 121 lines the [2Fe-2S] cluster pocket. Positions 122 and 123 each coordinate Mg(2+). Lysine 123 carries the N6-carboxylysine modification. Residue cysteine 194 coordinates [2Fe-2S] cluster. Mg(2+) is bound at residue glutamate 446. Serine 472 acts as the Proton acceptor in catalysis.

Belongs to the IlvD/Edd family. As to quaternary structure, homodimer. [2Fe-2S] cluster is required as a cofactor. It depends on Mg(2+) as a cofactor.

It carries out the reaction (2R)-2,3-dihydroxy-3-methylbutanoate = 3-methyl-2-oxobutanoate + H2O. It catalyses the reaction (2R,3R)-2,3-dihydroxy-3-methylpentanoate = (S)-3-methyl-2-oxopentanoate + H2O. Its pathway is amino-acid biosynthesis; L-isoleucine biosynthesis; L-isoleucine from 2-oxobutanoate: step 3/4. It functions in the pathway amino-acid biosynthesis; L-valine biosynthesis; L-valine from pyruvate: step 3/4. In terms of biological role, functions in the biosynthesis of branched-chain amino acids. Catalyzes the dehydration of (2R,3R)-2,3-dihydroxy-3-methylpentanoate (2,3-dihydroxy-3-methylvalerate) into 2-oxo-3-methylpentanoate (2-oxo-3-methylvalerate) and of (2R)-2,3-dihydroxy-3-methylbutanoate (2,3-dihydroxyisovalerate) into 2-oxo-3-methylbutanoate (2-oxoisovalerate), the penultimate precursor to L-isoleucine and L-valine, respectively. The protein is Dihydroxy-acid dehydratase of Staphylococcus epidermidis (strain ATCC 35984 / DSM 28319 / BCRC 17069 / CCUG 31568 / BM 3577 / RP62A).